Consider the following 312-residue polypeptide: Olfactory receptor 10D3 (312 aa).

The Extracellular segment spans residues 1–26; it reads MEVKNCCMVTEFILLGIPHTEGLEMT. A helical membrane pass occupies residues 27–47; it reads LFVLFLPFYACTLLGNVSILV. Residues 48-57 lie on the Cytoplasmic side of the membrane; the sequence is AVMSSARLHT. The chain crosses the membrane as a helical span at residues 58-78; it reads PMYFFLGNLSVFDMGFSSVTC. At 79 to 97 the chain is on the extracellular side; that stretch reads PKMLLYLMGLSRLISYKDC. Cys97 and Cys179 are disulfide-bonded. A helical transmembrane segment spans residues 98-118; it reads VCQLFFFHFLGSIECFLFTVM. Residues 119–139 are Cytoplasmic-facing; the sequence is AYDRFTAICYPLRYTVIMNPR. The chain crosses the membrane as a helical span at residues 140–160; it reads ICVALAVGTWLLGCIHSSILT. Over 161-197 the chain is Extracellular; sequence SLTFTLPYCGPNEVDHFFCDIPALLPLACADTSLAQR. The helical transmembrane segment at 198-218 threads the bilayer; that stretch reads VSFTNVGLISLVCFLLILLSY. Residues 219-239 are Cytoplasmic-facing; it reads TRITISILSIRTTEGRRRAFS. Residues 240–260 form a helical membrane-spanning segment; the sequence is TCSAHLIAILCAYGPIITVYL. At 261-266 the chain is on the extracellular side; the sequence is QPTPNP. A helical transmembrane segment spans residues 267 to 287; sequence MLGTVVQILMNLVGPMLNPLI. Topologically, residues 288–312 are cytoplasmic; the sequence is YTLRNKEVKTALKTILHRTGHVPES.

It belongs to the G-protein coupled receptor 1 family.

It localises to the cell membrane. Its function is as follows. Odorant receptor. In Homo sapiens (Human), this protein is Olfactory receptor 10D3.